We begin with the raw amino-acid sequence, 470 residues long: Membrane-bound lytic murein transglycosylase F (470 aa).

Residues 1 to 24 (MPSLKTKGAAGKFASLLLVLALSA) form the signal peptide. The non-LT domain stretch occupies residues 25 to 262 (CSRPAPPPET…RALERYFGHV (238 aa)). The interval 263-470 (KRLGSSDILG…RGEDGLPPPG (208 aa)) is LT domain. Residue glutamate 309 is part of the active site.

It in the N-terminal section; belongs to the bacterial solute-binding protein 3 family. This sequence in the C-terminal section; belongs to the transglycosylase Slt family.

The protein localises to the cell outer membrane. The enzyme catalyses Exolytic cleavage of the (1-&gt;4)-beta-glycosidic linkage between N-acetylmuramic acid (MurNAc) and N-acetylglucosamine (GlcNAc) residues in peptidoglycan, from either the reducing or the non-reducing ends of the peptidoglycan chains, with concomitant formation of a 1,6-anhydrobond in the MurNAc residue.. In terms of biological role, murein-degrading enzyme that degrades murein glycan strands and insoluble, high-molecular weight murein sacculi, with the concomitant formation of a 1,6-anhydromuramoyl product. Lytic transglycosylases (LTs) play an integral role in the metabolism of the peptidoglycan (PG) sacculus. Their lytic action creates space within the PG sacculus to allow for its expansion as well as for the insertion of various structures such as secretion systems and flagella. The sequence is that of Membrane-bound lytic murein transglycosylase F from Thiobacillus denitrificans (strain ATCC 25259 / T1).